The following is a 324-amino-acid chain: Homeobox protein engrailed-2 (324 aa).

3 disordered regions span residues Met1–Pro59, Gly89–Ala174, and Asp215–Thr240. Residues Gly89–Gly110 are compositionally biased toward gly residues. The segment at residues Asp235 to Thr294 is a DNA-binding region (homeobox).

Belongs to the engrailed homeobox family. Cerebellar granule cells.

Its subcellular location is the nucleus. This is Homeobox protein engrailed-2 (En2) from Mus musculus (Mouse).